The following is a 90-amino-acid chain: MAKVLVLLKVLPEDINIDLEELKEKIRKALPEGYEIKGYDIEPIAFGLKALRLYIFMPEETEGGTEPLENTVMNVEGVSQVEVEAVHRIT.

Belongs to the EF-1-beta/EF-1-delta family.

Its function is as follows. Promotes the exchange of GDP for GTP in EF-1-alpha/GDP, thus allowing the regeneration of EF-1-alpha/GTP that could then be used to form the ternary complex EF-1-alpha/GTP/AAtRNA. The chain is Elongation factor 1-beta from Staphylothermus marinus (strain ATCC 43588 / DSM 3639 / JCM 9404 / F1).